A 295-amino-acid polypeptide reads, in one-letter code: Putative enoyl reductase C646.07c (295 aa).

The Cytoplasmic segment spans residues 1-84 (MSITLSSRGR…KDLGPQIGWR (84 aa)). The helical transmembrane segment at 85-105 (TVFMIEYLGPLVIHLFFILNY) threads the bilayer. At 106-157 (KWIYRKDYNLCLNQKIAFVLVMLHFMKREYESIFVHRFSLATMPLRNIFKNC) the chain is on the lumenal side. Residues 158-178 (AHYHLLSGLFLAYFIYGPWHA) form a helical membrane-spanning segment. Residues 179 to 186 (NDYIKPNH) lie on the Cytoplasmic side of the membrane. A helical membrane pass occupies residues 187 to 207 (LLFLIVGWAFAVLSNFRTHII). At 208 to 223 (LRDLRPAGSKKRVIPT) the chain is on the lumenal side. A helical membrane pass occupies residues 224 to 246 (GYGFNLVSFPNYFFESLGWLFFA). Topologically, residues 247–250 (LLTK) are cytoplasmic. A helical membrane pass occupies residues 251 to 268 (SWASWIFLFVGSAQMFVW). Residues 269 to 295 (AKKKHARYLKEFPNYPRSRKIMIPFFL) lie on the Lumenal side of the membrane.

The protein belongs to the steroid 5-alpha reductase family.

It is found in the endoplasmic reticulum membrane. The enzyme catalyses a (2E)-enoyl-CoA + NADPH + H(+) = a 2,3-saturated acyl-CoA + NADP(+). In Schizosaccharomyces pombe (strain 972 / ATCC 24843) (Fission yeast), this protein is Putative enoyl reductase C646.07c.